Reading from the N-terminus, the 184-residue chain is Guanylate kinase (184 aa).

One can recognise a Guanylate kinase-like domain in the interval 4–182; that stretch reads MGLTVLSGPS…AAARLVALMI (179 aa). Residue 11 to 18 participates in ATP binding; that stretch reads GPSGVGKD.

Belongs to the guanylate kinase family.

It is found in the cytoplasm. It catalyses the reaction GMP + ATP = GDP + ADP. Its function is as follows. Essential for recycling GMP and indirectly, cGMP. In Frankia casuarinae (strain DSM 45818 / CECT 9043 / HFP020203 / CcI3), this protein is Guanylate kinase.